The primary structure comprises 398 residues: Pentalenolactone synthase (398 aa).

Cys347 contacts heme.

The protein belongs to the cytochrome P450 family. The cofactor is heme.

The catalysed reaction is pentalenolactone F + 2 reduced [2Fe-2S]-[ferredoxin] + O2 + 2 H(+) = pentalenolactone + 2 oxidized [2Fe-2S]-[ferredoxin] + 2 H2O. It participates in antibiotic biosynthesis; pentalenolactone biosynthesis. Catalyzes the final step in the biosynthesis of the sesquiterpenoid antibiotic pentalenolactone by mediating the oxidative rearrangement of pentalenolactone F to pentalenolactone. This chain is Pentalenolactone synthase (penM), found in Streptomyces exfoliatus (Streptomyces hydrogenans).